The following is a 206-amino-acid chain: Ion-translocating oxidoreductase complex subunit G (206 aa).

The helical transmembrane segment at 9–29 threads the bilayer; that stretch reads GITLALFAAGSTGLTAAINQM. An FMN phosphoryl threonine modification is found at Thr174.

The protein belongs to the RnfG family. As to quaternary structure, the complex is composed of six subunits: RsxA, RsxB, RsxC, RsxD, RsxE and RsxG. FMN is required as a cofactor.

Its subcellular location is the cell inner membrane. Its function is as follows. Part of a membrane-bound complex that couples electron transfer with translocation of ions across the membrane. Required to maintain the reduced state of SoxR. The sequence is that of Ion-translocating oxidoreductase complex subunit G from Escherichia coli O157:H7.